A 55-amino-acid polypeptide reads, in one-letter code: Conotoxin Cal22c (55 aa).

The propeptide occupies G1–A5.

Contains 4 disulfide bonds. In terms of tissue distribution, expressed by the venom duct.

The protein localises to the secreted. In terms of biological role, probable neurotoxin with unknown target. Possibly targets ion channels. In Californiconus californicus (California cone), this protein is Conotoxin Cal22c.